A 436-amino-acid chain; its full sequence is 3-ketoacyl-CoA thiolase (436 aa).

The active-site Acyl-thioester intermediate is C99. Active-site proton acceptor residues include H392 and C422.

It belongs to the thiolase-like superfamily. Thiolase family. As to quaternary structure, heterotetramer of two alpha chains (FadJ) and two beta chains (FadI).

Its subcellular location is the cytoplasm. It carries out the reaction an acyl-CoA + acetyl-CoA = a 3-oxoacyl-CoA + CoA. It participates in lipid metabolism; fatty acid beta-oxidation. Functionally, catalyzes the final step of fatty acid oxidation in which acetyl-CoA is released and the CoA ester of a fatty acid two carbons shorter is formed. The protein is 3-ketoacyl-CoA thiolase of Shewanella sp. (strain W3-18-1).